The following is a 387-amino-acid chain: Ferrochelatase (387 aa).

2 residues coordinate Fe cation: histidine 196 and glutamate 277.

The protein belongs to the ferrochelatase family.

It is found in the cytoplasm. It carries out the reaction heme b + 2 H(+) = protoporphyrin IX + Fe(2+). It participates in porphyrin-containing compound metabolism; protoheme biosynthesis; protoheme from protoporphyrin-IX: step 1/1. Functionally, catalyzes the ferrous insertion into protoporphyrin IX. The polypeptide is Ferrochelatase (Cyanothece sp. (strain PCC 7425 / ATCC 29141)).